We begin with the raw amino-acid sequence, 163 residues long: Inorganic pyrophosphatase (163 aa).

E8 provides a ligand contact to Mg(2+). Substrate is bound by residues K16, R30, and Y42. Residues D52, D57, D84, and D89 each coordinate Mg(2+). The active-site Proton acceptor is D89. Y126 contacts substrate.

Belongs to the PPase family. In terms of assembly, homohexamer. Mg(2+) is required as a cofactor.

It localises to the cytoplasm. The enzyme catalyses diphosphate + H2O = 2 phosphate + H(+). Catalyzes the hydrolysis of inorganic pyrophosphate (PPi) forming two phosphate ions. The polypeptide is Inorganic pyrophosphatase (Streptomyces coelicolor (strain ATCC BAA-471 / A3(2) / M145)).